Here is a 68-residue protein sequence, read N- to C-terminus: Large ribosomal subunit protein bL31 (68 aa).

Zn(2+)-binding residues include Cys-16, Cys-18, Cys-36, and Cys-39.

It belongs to the bacterial ribosomal protein bL31 family. Type A subfamily. As to quaternary structure, part of the 50S ribosomal subunit. Requires Zn(2+) as cofactor.

Its function is as follows. Binds the 23S rRNA. The protein is Large ribosomal subunit protein bL31 of Sorangium cellulosum (strain So ce56) (Polyangium cellulosum (strain So ce56)).